A 286-amino-acid chain; its full sequence is 33 kDa chaperonin (286 aa).

2 disulfides stabilise this stretch: cysteine 225/cysteine 227 and cysteine 258/cysteine 261.

It belongs to the HSP33 family. In terms of processing, under oxidizing conditions two disulfide bonds are formed involving the reactive cysteines. Under reducing conditions zinc is bound to the reactive cysteines and the protein is inactive.

The protein resides in the cytoplasm. Redox regulated molecular chaperone. Protects both thermally unfolding and oxidatively damaged proteins from irreversible aggregation. Plays an important role in the bacterial defense system toward oxidative stress. The sequence is that of 33 kDa chaperonin from Shewanella sp. (strain ANA-3).